Reading from the N-terminus, the 389-residue chain is Alpha-(1,3)-fucosyltransferase 7 (389 aa).

Topologically, residues M1 to P55 are cytoplasmic. A helical; Signal-anchor for type II membrane protein membrane pass occupies residues T56–W78. The Lumenal portion of the chain corresponds to L79–A389. C115 and C123 are joined by a disulfide. N128 carries N-linked (GlcNAc...) asparagine glycosylation. C258 and C261 are joined by a disulfide. A glycan (N-linked (GlcNAc...) asparagine) is linked at N338. A disulfide bond links C365 and C368.

It belongs to the glycosyltransferase 10 family. N-glycosylated. In terms of tissue distribution, highly expressed in lung and bone marrow and to a much lesser extent in spleen, salivary gland and skeletal muscle.

It is found in the golgi apparatus. It localises to the golgi stack membrane. It carries out the reaction an N-acetyl-alpha-neuraminyl-(2-&gt;3)-beta-D-galactosyl-(1-&gt;4)-N-acetyl-beta-D-glucosaminyl derivative + GDP-beta-L-fucose = an alpha-Neu5Ac-(2-&gt;3)-beta-D-Gal-(1-&gt;4)-[alpha-L-Fuc-(1-&gt;3)]-beta-D-GlcNAc derivative + GDP + H(+). It catalyses the reaction an alpha-Neu5Ac-(2-&gt;3)-beta-D-Gal-(1-&gt;4)-beta-D-GlcNAc6S derivative + GDP-beta-L-fucose = an alpha-Neu5Ac-(2-&gt;3)-beta-D-Gal-(1-&gt;4)-[alpha-L-Fuc-(1-&gt;3)]-beta-D-GlcNAc6S derivative + GDP + H(+). The enzyme catalyses a neolactoside IV(3)-alpha-NeuAc-nLc4Cer + GDP-beta-L-fucose = a neolactoside IV(3)-alpha-NeuNAc,III(3)-alpha-Fuc-nLc4Cer + GDP + H(+). The catalysed reaction is a neolactoside VI(3)-alpha-NeuNAc-nLc6Cer + GDP-beta-L-fucose = a neolactoside VI(3)-alpha-NeuAc,V(3)-alphaFuc-nLc6Cer + GDP + H(+). It carries out the reaction an alpha-Neu5Ac-(2-&gt;3)-beta-D-Gal-(1-&gt;4)-beta-D-GlcNAc-(1-&gt;3)-beta-D-Gal-(1-&gt;4)-[alpha-L-Fuc-(1-&gt;3)]-beta-D-GlcNAc derivative + GDP-beta-L-fucose = an alpha-Neu5Ac-(2-&gt;3)-beta-D-Gal-(1-&gt;4)-[alpha-L-Fuc-(1-&gt;3)]-beta-D-GlcNAc-(1-&gt;3)-beta-D-Gal-(1-&gt;4)-[alpha-L-Fuc-(1-&gt;3)]-beta-D-GlcNAc derivative + GDP + H(+). It catalyses the reaction alpha-Neu5Ac-(2-&gt;3)-beta-D-Gal-(1-&gt;4)-beta-D-GlcNAc-(1-&gt;3)-beta-D-Gal-(1-&gt;4)-D-Glc + GDP-beta-L-fucose = alpha-Neu5Ac-(2-&gt;3)-beta-D-Gal-(1-&gt;4)-[alpha-L-Fuc-(1-&gt;3)]-beta-D-GlcNAc-(1-&gt;3)-beta-D-Gal-(1-&gt;4)-D-Glc + GDP + H(+). The enzyme catalyses alpha-Neu5Ac-(2-&gt;3)-beta-D-Gal-(1-&gt;4)-beta-D-GlcNAc-(1-&gt;3)-beta-D-Gal-(1-&gt;4)-[alpha-L-Fuc-(1-&gt;3)]-beta-D-GlcNAc-(1-&gt;3)-beta-D-Gal-(1-&gt;4)-beta-D-GlcNAc + GDP-beta-L-fucose = alpha-Neu5Ac-(2-&gt;3)-beta-D-Gal-(1-&gt;4)-[alpha-L-Fuc-(1-&gt;3)]-beta-D-GlcNAc-(1-&gt;3)-beta-D-Gal-(1-&gt;4)-[alpha-L-Fuc-(1-&gt;3)]-beta-D-GlcNAc-(1-&gt;3)-beta-D-Gal-(1-&gt;4)-beta-D-GlcNAc + GDP + H(+). The catalysed reaction is alpha-Neu5Ac-(2-&gt;3)-beta-D-Gal-(1-&gt;4)-beta-D-GlcNAc-(1-&gt;3)-beta-D-Gal-(1-&gt;4)-beta-D-GlcNAc-(1-&gt;3)-beta-D-Gal-(1-&gt;4)-beta-D-GlcNAc + GDP-beta-L-fucose = alpha-Neu5Ac-(2-&gt;3)-beta-D-Gal-(1-&gt;4)-[alpha-L-Fuc-(1-&gt;3)]-beta-D-GlcNAc-(1-&gt;3)-beta-D-Gal-(1-&gt;4)-beta-D-GlcNAc-(1-&gt;3)-beta-D-Gal-(1-&gt;4)-beta-D-GlcNAc + GDP + H(+). It participates in protein modification; protein glycosylation. Inhibited by NaCl. Inhibited by GDP in a concentration dependent manner, with an IC(50) value of 93 uM. Also inhibited by GMP and GTP. Inhibited by N-ethylmaleimide. Activated by poly(ethylene glycol) by enhancing the thermal stability of FUT7. Activated by Mn2+, Ca2+, and Mg2+. Both panosialin A and B inhibit activity with IC(50) values of 4.8 and 5.3 ug/ml, respectively. Inhibited by gallic acid (GA) and (-)-epigallocatechin gallate (EGCG) in a time-dependent and irreversible manner with IC(50) values of 60 and 700 nM, respectively. Functionally, catalyzes the transfer of L-fucose, from a guanosine diphosphate-beta-L-fucose, to the N-acetyl glucosamine (GlcNAc) of a distal alpha2,3 sialylated lactosamine unit of a glycoprotein or a glycolipid-linked sialopolylactosamines chain through an alpha-1,3 glycosidic linkage and participates in the final fucosylation step in the biosynthesis of the sialyl Lewis X (sLe(x)), a carbohydrate involved in cell and matrix adhesion during leukocyte trafficking and fertilization. In vitro, also synthesizes sialyl-dimeric-Lex structures, from VIM-2 structures and both di-fucosylated and trifucosylated structures from mono-fucosylated precursors. However does not catalyze alpha 1-3 fucosylation when an internal alpha 1-3 fucosylation is present in polylactosamine chain and the fucosylation rate of the internal GlcNAc residues is reduced once fucose has been added to the distal GlcNAc. Also catalyzes the transfer of a fucose from GDP-beta-fucose to the 6-sulfated a(2,3)sialylated substrate to produce 6-sulfo sLex mediating significant L-selectin-dependent cell adhesion. Through sialyl-Lewis(x) biosynthesis, can control SELE- and SELP-mediated cell adhesion with leukocytes and allows leukocytes tethering and rolling along the endothelial tissue thereby enabling the leukocytes to accumulate at a site of inflammation. May enhance embryo implantation through sialyl Lewis X (sLeX)-mediated adhesion of embryo cells to endometrium. May affect insulin signaling by up-regulating the phosphorylation and expression of some signaling molecules involved in the insulin-signaling pathway through SLe(x) which is present on the glycans of the INSRR alpha subunit. The sequence is that of Alpha-(1,3)-fucosyltransferase 7 from Mus musculus (Mouse).